Reading from the N-terminus, the 244-residue chain is Salivary gland SP38-40.A protein (244 aa).

An N-terminal signal peptide occupies residues 1 to 21 (MRIKFLVVLAVICLFAHYASA). Disordered stretches follow at residues 23 to 91 (GMGG…EKKQ), 137 to 169 (PPPGAKKDDKKEKKTVKVVKPPKEKPPKKLRKE), and 206 to 244 (VQGKQKKGAKKAKGGKKAAPKPGPKPGPKQADKPKDAKK). Basic and acidic residues-rich tracts occupy residues 26 to 86 (GDKK…EVKK) and 157 to 169 (PPKEKPPKKLRKE). A run of 2 repeats spans residues 29–34 (KPKDAP) and 35–40 (KPKDAP). Positions 29–47 (KPKDAPKPKDAPKPKEVKP) are 3 X 6 AA approximate tandem repeats of K-P-K-D-A-P. Residues 41–47 (KPKEVKP) form a 1-3; approximate repeat. Tandem repeats lie at residues 156-159 (KPPK) and 161-164 (KPPK). Residues 156–168 (KPPKEKPPKKLRK) form a 3 X 4 AA approximate tandem repeats of K-P-P-K region. The stretch at 165 to 168 (KLRK) is one 2-3; approximate repeat. Residues 209–224 (KQKKGAKKAKGGKKAA) are compositionally biased toward basic residues. 3 tandem repeats follow at residues 225–228 (PKPG), 229–232 (PKPG), and 233–236 (PKQA). The 4 X 4 AA approximate tandem repeats of P-K-[PQ]-[GA] stretch occupies residues 225–240 (PKPGPKPGPKQADKPK). Basic and acidic residues predominate over residues 235–244 (QADKPKDAKK). The stretch at 237–240 (DKPK) is one 3-4; approximate repeat.

As to expression, salivary gland.

It localises to the secreted. In terms of biological role, used by the larvae to construct a supramolecular structure, the larval tube. The chain is Salivary gland SP38-40.A protein (SP38-40.A) from Chironomus tentans (Midge).